Reading from the N-terminus, the 1033-residue chain is Kinesin-like protein KIN-4A (1033 aa).

Positions 11–366 (CVKVAVHVRP…LKYANRARNI (356 aa)) constitute a Kinesin motor domain. Residue 89–96 (GQTGSGKT) participates in ATP binding. The tract at residues 443–462 (QDGSPCSVESDGLKRNLRSR) is disordered. Basic and acidic residues predominate over residues 453 to 462 (DGLKRNLRSR). A coiled-coil region spans residues 525–638 (ALKQHFGKKI…IKQEAEQFRQ (114 aa)). The segment at 763–785 (DELDSKGPSPSRGKNGCARGSSL) is disordered. Positions 863-895 (IEIREMKEQLKELVGLLRQSELQRKEVENELKL) form a coiled coil.

The protein belongs to the TRAFAC class myosin-kinesin ATPase superfamily. Kinesin family. KIN-4 subfamily. As to quaternary structure, homodimer. In terms of tissue distribution, expressed in cotton fibers.

Its subcellular location is the cytoplasm. In terms of biological role, kinesin-like motor protein involved in the control of the oriented deposition of cellulose microfibrils. In Gossypium hirsutum (Upland cotton), this protein is Kinesin-like protein KIN-4A.